Here is a 46-residue protein sequence, read N- to C-terminus: Viscotoxin-1-PS (46 aa).

3 cysteine pairs are disulfide-bonded: Cys-3-Cys-40, Cys-4-Cys-32, and Cys-16-Cys-26.

Belongs to the plant thionin (TC 1.C.44) family.

The protein resides in the secreted. In terms of biological role, thionins are small plant proteins which are toxic to animal cells. They seem to exert their toxic effect at the level of the cell membrane. Their precise function is not known. The sequence is that of Viscotoxin-1-PS (THI2.4) from Viscum album (European mistletoe).